A 259-amino-acid chain; its full sequence is uncharacterized protein (259 aa).

A signal peptide spans 1–22; the sequence is MKHSKKLLLCISFLLITVFISG. Cys23 is lipidated: N-palmitoyl cysteine. A lipid anchor (S-diacylglycerol cysteine) is attached at Cys23.

It belongs to the staphylococcal tandem lipoprotein family.

It is found in the cell membrane. This is an uncharacterized protein from Staphylococcus epidermidis (strain ATCC 35984 / DSM 28319 / BCRC 17069 / CCUG 31568 / BM 3577 / RP62A).